The following is a 490-amino-acid chain: Argininosuccinate lyase (490 aa).

Disordered stretches follow at residues 426–452 (DPES…LSAA) and 469–490 (ALAT…TAPE). Residues 440–452 (PAPESMAAALSAA) show a composition bias toward low complexity. Residues 469-480 (ALATAADERERV) are compositionally biased toward basic and acidic residues.

This sequence belongs to the lyase 1 family. Argininosuccinate lyase subfamily.

It localises to the cytoplasm. It catalyses the reaction 2-(N(omega)-L-arginino)succinate = fumarate + L-arginine. It participates in amino-acid biosynthesis; L-arginine biosynthesis; L-arginine from L-ornithine and carbamoyl phosphate: step 3/3. In Natronomonas pharaonis (strain ATCC 35678 / DSM 2160 / CIP 103997 / JCM 8858 / NBRC 14720 / NCIMB 2260 / Gabara) (Halobacterium pharaonis), this protein is Argininosuccinate lyase.